The sequence spans 119 residues: Dolichyl-diphosphooligosaccharide--protein glycosyltransferase subunit DAD1 (119 aa).

Ser2 bears the N-acetylserine mark. Over 2 to 30 (SASVASVISRFLEEYLSSTPQRLKLLDAY) the chain is Cytoplasmic. A helical transmembrane segment spans residues 31-51 (LLYILLTGALQFGYCLLVGTF). The Lumenal portion of the chain corresponds to 52 to 54 (PFN). A helical transmembrane segment spans residues 55–75 (SFLSGFISCVGSFILAGNGSL). Over 76–81 (RNRSNN) the chain is Cytoplasmic. The chain crosses the membrane as a helical span at residues 82–98 (VFTLVRCFSSLVTLFYS). Residues 99-119 (RSPPREVPRGACIALFCERGN) are Lumenal-facing.

Belongs to the DAD/OST2 family. Component of the oligosaccharyltransferase (OST) complex. OST exists in two different complex forms which contain common core subunits RPN1, RPN2, OST48, OST4, DAD1 and TMEM258, either STT3A or STT3B as catalytic subunits, and form-specific accessory subunits. STT3A complex assembly occurs through the formation of 3 subcomplexes. Subcomplex 1 contains RPN1 and TMEM258, subcomplex 2 contains the STT3A-specific subunits STT3A, DC2/OSTC, and KCP2 as well as the core subunit OST4, and subcomplex 3 contains RPN2, DAD1, and OST48. The STT3A complex can form stable complexes with the Sec61 complex or with both the Sec61 and TRAP complexes.

It localises to the endoplasmic reticulum membrane. Its pathway is protein modification; protein glycosylation. In terms of biological role, subunit of the oligosaccharyl transferase (OST) complex that catalyzes the initial transfer of a defined glycan (Glc(3)Man(9)GlcNAc(2) in eukaryotes) from the lipid carrier dolichol-pyrophosphate to an asparagine residue within an Asn-X-Ser/Thr consensus motif in nascent polypeptide chains, the first step in protein N-glycosylation. N-glycosylation occurs cotranslationally and the complex associates with the Sec61 complex at the channel-forming translocon complex that mediates protein translocation across the endoplasmic reticulum (ER). All subunits are required for a maximal enzyme activity. The protein is Dolichyl-diphosphooligosaccharide--protein glycosyltransferase subunit DAD1 of Canis lupus familiaris (Dog).